We begin with the raw amino-acid sequence, 455 residues long: Single-stranded DNA-binding protein homolog sam-10 (455 aa).

Residues 19-51 (ARDRLTSYIYEYLQQTGASKTAETFKEEVLSTN) enclose the LisH domain. Disordered stretches follow at residues 217 to 249 (PPPG…LNSP), 281 to 302 (SDHQ…TAGG), 314 to 343 (GPGS…HQPK), and 357 to 442 (EALT…NGEI). 2 stretches are compositionally biased toward low complexity: residues 288–298 (AGPAAAAPGAT) and 321–336 (VATT…SSIG). Polar residues predominate over residues 396-406 (HSVNNNVNPGT). A compositionally biased stretch (low complexity) spans 407–421 (PGSNPLSNPMSNPPL).

In terms of tissue distribution, ubiquitously expressed with higher expression in the head and tail ganglia, the vulva and PLM neurons.

It is found in the cytoplasm. The protein localises to the nucleus. Its function is as follows. Involved cell autonomously in PLM neuron pre-synaptic differentiation by negatively regulating prk-2 expression and in neurite branch positioning. The sequence is that of Single-stranded DNA-binding protein homolog sam-10 from Caenorhabditis elegans.